Here is a 170-residue protein sequence, read N- to C-terminus: NADH-quinone oxidoreductase subunit B (170 aa).

Cysteine 37, cysteine 38, cysteine 102, and cysteine 131 together coordinate [4Fe-4S] cluster.

This sequence belongs to the complex I 20 kDa subunit family. NDH-1 is composed of 14 different subunits. Subunits NuoB, C, D, E, F, and G constitute the peripheral sector of the complex. It depends on [4Fe-4S] cluster as a cofactor.

It is found in the cell inner membrane. The enzyme catalyses a quinone + NADH + 5 H(+)(in) = a quinol + NAD(+) + 4 H(+)(out). Its function is as follows. NDH-1 shuttles electrons from NADH, via FMN and iron-sulfur (Fe-S) centers, to quinones in the respiratory chain. The immediate electron acceptor for the enzyme in this species is believed to be ubiquinone. Couples the redox reaction to proton translocation (for every two electrons transferred, four hydrogen ions are translocated across the cytoplasmic membrane), and thus conserves the redox energy in a proton gradient. The polypeptide is NADH-quinone oxidoreductase subunit B (Geobacter sulfurreducens (strain ATCC 51573 / DSM 12127 / PCA)).